Here is a 216-residue protein sequence, read N- to C-terminus: MOB kinase activator 1B (216 aa).

Ser2 carries the N-acetylserine modification. 2 positions are modified to phosphothreonine; by STK4/MST1: Thr12 and Thr35. The Zn(2+) site is built by Cys79, Cys84, His161, and His166.

This sequence belongs to the MOB1/phocein family. Binds STK38L. Interacts with LATS1 and LATS2. Post-translationally, phosphorylated by STK3/MST2 and STK4/MST1 and this phosphorylation enhances its binding to LATS1. Adrenal gland, bone marrow, brain, lung, placenta, prostate, salivary gland, skeletal muscle, testis, thymus, thyroid gland, uterus, colon with mucosa, fetal brain and fetal liver.

The protein localises to the cytoplasm. Its subcellular location is the nucleus. Functionally, activator of LATS1/2 in the Hippo signaling pathway which plays a pivotal role in organ size control and tumor suppression by restricting proliferation and promoting apoptosis. The core of this pathway is composed of a kinase cascade wherein STK3/MST2 and STK4/MST1, in complex with its regulatory protein SAV1, phosphorylates and activates LATS1/2 in complex with its regulatory protein MOB1, which in turn phosphorylates and inactivates YAP1 oncoprotein and WWTR1/TAZ. Phosphorylation of YAP1 by LATS1/2 inhibits its translocation into the nucleus to regulate cellular genes important for cell proliferation, cell death, and cell migration. Stimulates the kinase activity of STK38L. The sequence is that of MOB kinase activator 1B from Homo sapiens (Human).